The following is a 397-amino-acid chain: ATP-dependent RNA helicase eIF4A (397 aa).

Residues 23–51 carry the Q motif motif; that stretch reads YKFDDLNLKPNIVRGIFGYGYETPSAIQQ. The Helicase ATP-binding domain occupies 54 to 224; sequence ILPITEGRDV…TKFMNNPVRI (171 aa). 67–74 contributes to the ATP binding site; it reads AQSGTGKT. Residues 172 to 175 carry the DEAD box motif; sequence DEAD. A Helicase C-terminal domain is found at 235 to 396; sequence GIKQFYINVE…EMPADIGALF (162 aa).

Belongs to the DEAD box helicase family. eIF4A subfamily. As to quaternary structure, component of the eIF4F complex, which composition varies with external and internal environmental conditions. It is composed of at least eIF4A, eIF4E and eIF4G.

Its subcellular location is the cytoplasm. It carries out the reaction ATP + H2O = ADP + phosphate + H(+). In terms of biological role, ATP-dependent RNA helicase which is a subunit of the eIF4F complex involved in cap recognition and is required for mRNA binding to ribosome. In the current model of translation initiation, eIF4A unwinds RNA secondary structures in the 5'-UTR of mRNAs which is necessary to allow efficient binding of the small ribosomal subunit, and subsequent scanning for the initiator codon. The sequence is that of ATP-dependent RNA helicase eIF4A (TIF1) from Candida albicans (strain SC5314 / ATCC MYA-2876) (Yeast).